A 415-amino-acid chain; its full sequence is Gamma-glutamyl phosphate reductase (415 aa).

Belongs to the gamma-glutamyl phosphate reductase family.

It is found in the cytoplasm. The catalysed reaction is L-glutamate 5-semialdehyde + phosphate + NADP(+) = L-glutamyl 5-phosphate + NADPH + H(+). It functions in the pathway amino-acid biosynthesis; L-proline biosynthesis; L-glutamate 5-semialdehyde from L-glutamate: step 2/2. In terms of biological role, catalyzes the NADPH-dependent reduction of L-glutamate 5-phosphate into L-glutamate 5-semialdehyde and phosphate. The product spontaneously undergoes cyclization to form 1-pyrroline-5-carboxylate. The chain is Gamma-glutamyl phosphate reductase from Thermotoga sp. (strain RQ2).